Reading from the N-terminus, the 200-residue chain is Superoxide dismutase [Mn] 1 (200 aa).

4 residues coordinate Mn(2+): His-29, His-76, Asp-158, and His-162.

It belongs to the iron/manganese superoxide dismutase family. In terms of assembly, homodimer or homotetramer. Requires Mn(2+) as cofactor.

The catalysed reaction is 2 superoxide + 2 H(+) = H2O2 + O2. With respect to regulation, inhibited by hydrogen peroxide. Is resistant to cyanide and azide inhibition. Destroys superoxide anion radicals which are normally produced within the cells and which are toxic to biological systems. The polypeptide is Superoxide dismutase [Mn] 1 (sod1) (Halobacterium salinarum (strain ATCC 700922 / JCM 11081 / NRC-1) (Halobacterium halobium)).